The primary structure comprises 62 residues: MSERQSAGATNGKDKTSGDNDGQKKVQEEFDIDMDAPETERAAVAIQSQFRKFQKKKAGSQS.

The interval 1 to 39 (MSERQSAGATNGKDKTSGDNDGQKKVQEEFDIDMDAPET) is disordered. Residues 12-28 (GKDKTSGDNDGQKKVQE) show a composition bias toward basic and acidic residues. The acidic; binds calcium and is required for modulating the calcium-binding kinetics of calmodulin stretch occupies residues 28–40 (EEFDIDMDAPETE). The IQ domain occupies 39–62 (TERAAVAIQSQFRKFQKKKAGSQS).

It belongs to the PCP4 family. In terms of assembly, binds to both calcium-free and calcium-bound calmodulin. The affinity for the calcium-bound form is 50-fold greater.

In terms of biological role, functions as a modulator of calcium-binding by calmodulin. Thereby, regulates calmodulin activity and the different processes it controls. For instance, may play a role in neuronal differentiation through activation of calmodulin-dependent kinase signaling pathways. The chain is Calmodulin regulator protein PCP4 from Mus musculus (Mouse).